Consider the following 417-residue polypeptide: UPF0761 membrane protein Veis_3782 (417 aa).

A run of 6 helical transmembrane segments spans residues 54-74 (ILAL…FPIF), 111-131 (GLGL…ILTI), 151-171 (VLIY…SLAL), 192-212 (FLFD…LYHY), 226-246 (GGLF…LYLG), and 261-281 (LPIL…GAVV).

The protein belongs to the UPF0761 family.

It is found in the cell inner membrane. The sequence is that of UPF0761 membrane protein Veis_3782 from Verminephrobacter eiseniae (strain EF01-2).